The chain runs to 122 residues: Large ribosomal subunit protein uL14 (122 aa).

It belongs to the universal ribosomal protein uL14 family. Part of the 50S ribosomal subunit. Forms a cluster with proteins L3 and L19. In the 70S ribosome, L14 and L19 interact and together make contacts with the 16S rRNA in bridges B5 and B8.

Functionally, binds to 23S rRNA. Forms part of two intersubunit bridges in the 70S ribosome. The protein is Large ribosomal subunit protein uL14 of Acinetobacter baumannii (strain SDF).